Consider the following 199-residue polypeptide: 7-methyl-GTP pyrophosphatase (199 aa).

Asp-74 (proton acceptor) is an active-site residue.

It belongs to the Maf family. YceF subfamily. A divalent metal cation serves as cofactor.

The protein localises to the cytoplasm. It carries out the reaction N(7)-methyl-GTP + H2O = N(7)-methyl-GMP + diphosphate + H(+). Nucleoside triphosphate pyrophosphatase that hydrolyzes 7-methyl-GTP (m(7)GTP). May have a dual role in cell division arrest and in preventing the incorporation of modified nucleotides into cellular nucleic acids. This Cupriavidus pinatubonensis (strain JMP 134 / LMG 1197) (Cupriavidus necator (strain JMP 134)) protein is 7-methyl-GTP pyrophosphatase.